Here is a 72-residue protein sequence, read N- to C-terminus: Crustacean hyperglycemic hormone (72 aa).

3 cysteine pairs are disulfide-bonded: Cys-7-Cys-43, Cys-23-Cys-39, and Cys-26-Cys-52. Val-72 carries the valine amide modification.

The protein localises to the secreted. Its function is as follows. Hormone found in the sinus gland of isopods and decapods which controls the blood sugar level. Has a secretagogue action over the amylase released from the midgut gland. May act as a stress hormone and may be involved in the control of molting and reproduction. In Penaeus schmitti (White shrimp), this protein is Crustacean hyperglycemic hormone.